A 444-amino-acid chain; its full sequence is Serine carboxypeptidase-like 50 (444 aa).

The N-terminal stretch at 1–22 (MEQATTLFILLSTLLLAVSVES) is a signal peptide. Residues Cys-79 and Cys-308 are joined by a disulfide bond. Ser-170 is a catalytic residue. Asn-263 carries N-linked (GlcNAc...) asparagine glycosylation. Residue Asp-345 is part of the active site. Asn-361 carries N-linked (GlcNAc...) asparagine glycosylation. The active site involves His-403.

The protein belongs to the peptidase S10 family. Ubiquitous.

Its subcellular location is the secreted. Probable carboxypeptidase. The protein is Serine carboxypeptidase-like 50 (SCPL50) of Arabidopsis thaliana (Mouse-ear cress).